The primary structure comprises 425 residues: Orexin/Hypocretin receptor type 1 (425 aa).

Topologically, residues 1 to 46 (MEPSATPGPQMGVPTGVGDPSLVPPDYEEEFLSYLWRDYLYPKQYE) are extracellular. Residues 26-41 (DYEEEFLSYLWRDYLY) are required for response to orexin-A. A helical transmembrane segment spans residues 47 to 67 (WVLIAAYVAVFLVALVGNTLV). Residues 68–82 (CLAVWRNHHMRTVTN) are Cytoplasmic-facing. A helical transmembrane segment spans residues 83–105 (YFIVNLSLADVLVTAICLPASLL). The Extracellular segment spans residues 106–119 (VDITESWLFGHALC). Cys119 and Cys202 form a disulfide bridge. The helical transmembrane segment at 120–140 (KVIPYLQAVSVSVAVLTLSFI) threads the bilayer. The Cytoplasmic portion of the chain corresponds to 141–160 (ALDRWYAIYHPLLFKSTARR). The chain crosses the membrane as a helical span at residues 161–182 (ARGSILGIWAVSPAVMVPQAAV). At 183–213 (MECSSVLPELANRTRLFSVCDERWADDLYPK) the chain is on the extracellular side. A helical transmembrane segment spans residues 214–235 (IYHSCFFIVTYLAPLGLMAMAY). Residues 236–298 (FQIFRKLWGR…QMRARRKTAK (63 aa)) lie on the Cytoplasmic side of the membrane. The helical transmembrane segment at 299–321 (MLMVVLLVFALCYLPISVLNVLK) threads the bilayer. At 322–336 (RVFGMFRQTSDREAV) the chain is on the extracellular side. The chain crosses the membrane as a helical span at residues 337–360 (YACFTFSHWLVYANSAANPIIYNF). Residues 361-425 (LSGKFREQFK…VLTSVTTVLP (65 aa)) are Cytoplasmic-facing.

This sequence belongs to the G-protein coupled receptor 1 family.

The protein resides in the cell membrane. In terms of biological role, moderately selective excitatory receptor for orexin-A and, with a lower affinity, for orexin-B neuropeptide. Triggers an increase in cytoplasmic Ca(2+) levels in response to orexin-A binding. The chain is Orexin/Hypocretin receptor type 1 from Sus scrofa (Pig).